Here is a 205-residue protein sequence, read N- to C-terminus: Dephospho-CoA kinase (205 aa).

Positions 6–205 (RIGLTGGIAA…EIYAGWCAGR (200 aa)) constitute a DPCK domain. 14–19 (AAGKST) serves as a coordination point for ATP.

This sequence belongs to the CoaE family.

The protein resides in the cytoplasm. The catalysed reaction is 3'-dephospho-CoA + ATP = ADP + CoA + H(+). Its pathway is cofactor biosynthesis; coenzyme A biosynthesis; CoA from (R)-pantothenate: step 5/5. Its function is as follows. Catalyzes the phosphorylation of the 3'-hydroxyl group of dephosphocoenzyme A to form coenzyme A. This is Dephospho-CoA kinase from Bifidobacterium longum (strain NCC 2705).